We begin with the raw amino-acid sequence, 241 residues long: Uracil-DNA glycosylase (241 aa).

D71 serves as the catalytic Proton acceptor.

The protein belongs to the uracil-DNA glycosylase (UDG) superfamily. UNG family.

The protein localises to the cytoplasm. The enzyme catalyses Hydrolyzes single-stranded DNA or mismatched double-stranded DNA and polynucleotides, releasing free uracil.. Functionally, excises uracil residues from the DNA which can arise as a result of misincorporation of dUMP residues by DNA polymerase or due to deamination of cytosine. The chain is Uracil-DNA glycosylase from Xanthomonas axonopodis pv. citri (strain 306).